The primary structure comprises 90 residues: Probable Fe(2+)-trafficking protein (90 aa).

It belongs to the Fe(2+)-trafficking protein family.

In terms of biological role, could be a mediator in iron transactions between iron acquisition and iron-requiring processes, such as synthesis and/or repair of Fe-S clusters in biosynthetic enzymes. The sequence is that of Probable Fe(2+)-trafficking protein from Azoarcus sp. (strain BH72).